Here is an 85-residue protein sequence, read N- to C-terminus: UPF0386 protein RHECIAT_CH0001945 (85 aa).

Belongs to the UPF0386 family.

This Rhizobium etli (strain CIAT 652) protein is UPF0386 protein RHECIAT_CH0001945.